The primary structure comprises 566 residues: MTKYVFVTGGVVSSLGKGIAAASLAAILETRGIKVTLLKLDPYINVDPGTMSPFQHGEVFVTEDGAETDLDLGHYERFISGKMTRRNNFTTGQIYESVIKKERRGDYLGGTVQVIPHITDEIKHYIRVGAGDAQVAIVEIGGTVGDIESLPFLEAIRQMAVQLPREDTCFIHLTLLPYITSAGELKTKPTQHSVKELREIGIQPDVLLCRADRALPADERRKIALFTNVREEAVILALDVDSIYKIPSLLHDQMLDEIVCHKLNLLAKAADLSTWKKLVHALEHPERVIEIALVGKYVDLTESYKSLSEALIHAGIHTRSKINIHYVDSESIEKDGTGCLDGMDAILVPGGFGKRGVEGKIMAIHFARTNRIPYLGICLGMQLAVIEYARNKAGMQGAHSTEFHPETAYPVIALTIEWRSREGQLEIRTADSDLGGTMRLGGQECLLKEGSLARRIYGSDKIIERHRHRYEVNNQYIPRLEQAGMSISAVSAGEGLCEMVELPQTEHPWFVASQFHPEFTSTPRAGHPLFAAFIEAAAVFADKSPSSEGAISADKPERTTTGAYIQ.

Positions 1-265 are amidoligase domain; it reads MTKYVFVTGG…DEIVCHKLNL (265 aa). CTP is bound at residue serine 13. Serine 13 is a UTP binding site. ATP is bound by residues 14–19 and aspartate 71; that span reads SLGKGI. Mg(2+)-binding residues include aspartate 71 and glutamate 139. Residues 146 to 148, 186 to 191, and lysine 222 each bind CTP; these read DIE and KTKPTQ. UTP contacts are provided by residues 186-191 and lysine 222; that span reads KTKPTQ. Residues 290–543 enclose the Glutamine amidotransferase type-1 domain; the sequence is EIALVGKYVD…IEAAAVFADK (254 aa). Glycine 351 lines the L-glutamine pocket. The Nucleophile; for glutamine hydrolysis role is filled by cysteine 378. L-glutamine contacts are provided by residues 379 to 382, glutamate 402, and arginine 469; that span reads LGMQ. Active-site residues include histidine 516 and glutamate 518. The interval 545-566 is disordered; that stretch reads PSSEGAISADKPERTTTGAYIQ.

The protein belongs to the CTP synthase family. Homotetramer.

It carries out the reaction UTP + L-glutamine + ATP + H2O = CTP + L-glutamate + ADP + phosphate + 2 H(+). The catalysed reaction is L-glutamine + H2O = L-glutamate + NH4(+). The enzyme catalyses UTP + NH4(+) + ATP = CTP + ADP + phosphate + 2 H(+). It participates in pyrimidine metabolism; CTP biosynthesis via de novo pathway; CTP from UDP: step 2/2. With respect to regulation, allosterically activated by GTP, when glutamine is the substrate; GTP has no effect on the reaction when ammonia is the substrate. The allosteric effector GTP functions by stabilizing the protein conformation that binds the tetrahedral intermediate(s) formed during glutamine hydrolysis. Inhibited by the product CTP, via allosteric rather than competitive inhibition. In terms of biological role, catalyzes the ATP-dependent amination of UTP to CTP with either L-glutamine or ammonia as the source of nitrogen. Regulates intracellular CTP levels through interactions with the four ribonucleotide triphosphates. In Nitrosospira multiformis (strain ATCC 25196 / NCIMB 11849 / C 71), this protein is CTP synthase.